A 429-amino-acid chain; its full sequence is Divergent protein kinase domain 2A (429 aa).

Positions 1–34 (MLRLASLKFGRLFRYAKVLFAASLLVVMLLNTHS) are cleaved as a signal peptide.

This sequence belongs to the DIPK family.

The protein resides in the cytoplasmic vesicle. Its subcellular location is the COPI-coated vesicle. The protein localises to the golgi apparatus. It is found in the secreted. May play a role in cardiomyocyte proliferation through paracrine signaling and activation of the PPI3K-AKT-CDK7 signaling cascade. In Xenopus tropicalis (Western clawed frog), this protein is Divergent protein kinase domain 2A (dipk2a).